The sequence spans 670 residues: Probable Na(+)/H(+) antiporter nhx-3 (670 aa).

The next 8 helical transmembrane spans lie at 41 to 61, 73 to 93, 97 to 117, 129 to 149, 164 to 184, 192 to 212, 235 to 255, and 268 to 288; these read VYVITTWLLVASLAKILFNLM, LLIIVGLGLGYFLNQTTLSGV, SHAFFLYLLPPIIFDAGYFMP, LVFSVLGTLWNTFAIGGSLLI, EILVFSALISAVDPVAVIAIF, FLFINVFGEALFNDGVTVVLY, GLSFFVVALGGAAIGIIFAIA, and ILAPVFIFLLPYMAYLTAEMV. N-linked (GlcNAc...) asparagine glycosylation occurs at asparagine 310. 4 helical membrane-spanning segments follow: residues 325 to 345, 351 to 371, 390 to 410, and 418 to 438; these read MLAQCSETVIFMFLGLSTLTS, FIFIGATLVFCLIYRAIGIIV, FILSYGGLRGAIAYGLVVSIP, and MFITTTICVIYFTVFLQGITI. Residues 648–670 form a disordered region; the sequence is GDLKGHCGTSRKPKHSMFELRHV.

It belongs to the monovalent cation:proton antiporter 1 (CPA1) transporter (TC 2.A.36) family. In terms of processing, phosphorylated. As to expression, expressed in hypodermal cells of the main body syncytium, ut1 cells of the vulva and the spermathecal junction cell.

The protein resides in the endomembrane system. Plays a role in epithelial membrane transport processes. The sequence is that of Probable Na(+)/H(+) antiporter nhx-3 (nhx-3) from Caenorhabditis elegans.